Here is a 1356-residue protein sequence, read N- to C-terminus: Fibronectin type III domain containing protein 3C1 (1356 aa).

3 disordered regions span residues 303–341, 356–402, and 428–452; these read PRNMADNIPDTNTTDTITSSSAHTPSISTSNATFCSDNN, TYDE…SDVA, and NQKKSQSSNASLKEHNTEDRTQPGC. The segment covering 308-341 has biased composition (low complexity); that stretch reads DNIPDTNTTDTITSSSAHTPSISTSNATFCSDNN. Residues 370–393 are compositionally biased toward polar residues; sequence PSCTSQSASNPSVSENAHNPSSIN. The span at 439–448 shows a compositional bias: basic and acidic residues; the sequence is LKEHNTEDRT. Fibronectin type-III domains are found at residues 454–549, 553–648, 650–741, and 745–842; these read NIEK…TPGC, PPLA…TPPA, LPPK…TRPA, and CPNK…TLPP. The span at 825 to 838 shows a compositional bias: polar residues; it reads GQSRPSDVLTIQTP. The tract at residues 825–894 is disordered; that stretch reads GQSRPSDVLT…QDRKVHPSSE (70 aa). Over residues 883 to 894 the composition is skewed to basic and acidic residues; that stretch reads PHQDRKVHPSSE. Fibronectin type-III domains are found at residues 914–1007, 1017–1103, 1104–1199, and 1202–1299; these read PPSQ…TPGT, EVES…TKPL, PPEP…TKSP, and ALKA…TYKH. The segment at 1299-1320 is disordered; sequence HHSGHGKGSGSKGKGNHNDKGE. Residues 1330–1350 traverse the membrane as a helical segment; that stretch reads TFVLTLLIGFALIAVLCAVAV. Over 1351–1356 the chain is Cytoplasmic; it reads QYLLIN.

This sequence belongs to the FNDC3 family.

It is found in the membrane. This is Fibronectin type III domain containing protein 3C1 (Fndc3c1) from Mus musculus (Mouse).